A 927-amino-acid polypeptide reads, in one-letter code: F-box only protein 11 (927 aa).

Residues Met-1–His-132 form a disordered region. Residues Ala-7–Arg-16 are compositionally biased toward basic residues. Positions Pro-17–Pro-27 are enriched in low complexity. Residues Pro-28–Pro-68 are compositionally biased toward pro residues. Polar residues predominate over residues Pro-114–Asn-129. In terms of domain architecture, F-box spans Gln-153–Leu-199. PbH1 repeat units follow at residues Gly-395–Asp-417, His-418–Asn-440, His-441–Asp-463, His-464–Ala-486, Tyr-487–Glu-509, Lys-510–Ser-532, Asn-533–Gly-555, Asp-556–Thr-578, Asn-579–Glu-601, Lys-602–Thr-624, Gly-625–Asp-647, Asn-648–Thr-670, Gly-671–Asn-693, Ser-694–Thr-716, Asp-717–Asn-739, Gly-740–Thr-762, Asn-763–Asn-785, His-786–Ser-808, and Gly-809–Val-830. A UBR-type zinc finger spans residues Gly-833–Glu-904.

As to quaternary structure, component of the SCF(FBXO11) complex consisting of CUL1, RBX1, SKP1 and FBXO11. Interacts with CIITA. Isoform 5 is expressed in keratinocytes, fibroblasts and melanocytes.

It localises to the nucleus. Its subcellular location is the chromosome. The protein operates within protein modification; protein ubiquitination. In terms of biological role, substrate recognition component of a SCF (SKP1-CUL1-F-box protein) E3 ubiquitin-protein ligase complex which mediates the ubiquitination and subsequent proteasomal degradation of target proteins, such as DTL/CDT2, BCL6, SNAI1 and PRDM1/BLIMP1. The SCF(FBXO11) complex mediates ubiquitination and degradation of BCL6, thereby playing a role in the germinal center B-cells terminal differentiation toward memory B-cells and plasma cells. The SCF(FBXO11) complex also mediates ubiquitination and degradation of DTL, an important step for the regulation of TGF-beta signaling, cell migration and the timing of the cell-cycle progression and exit. The SCF(FBXO11) complex also catalyzes ubiquitination and degradation of GSK3B-phosphorylated SNAI1. Binds to and neddylates phosphorylated p53/TP53, inhibiting its transcriptional activity. Plays a role in the regulatiom of erythropoiesis but not myelopoiesis or megakaryopoiesis. Mechanistically, activates erythroid genes by mediating the degradation of BAHD1, a heterochromatin-associated protein that recruits corepressors to H3K27me3 marks. Participates in macrophage cell death and inflammation in response to bacterial toxins by regulating the expression of complement 5a receptor 1/C5AR1 and IL-1beta. Acts as a critical regulator to determine the level of MHC-II by mediating the recognition of degron at the P/S/T domain of CIITA leading to its ubiquitination and subsequent degradation via the proteasome. Participates in the antiviral repsonse by initiating the activation of TBK1-IRF3-IFN-I axis. Mediates the 'Lys-63'-linked ubiquitination of TRAF3 to strengthen the interaction between TRAF3 and TBK1. The polypeptide is F-box only protein 11 (Homo sapiens (Human)).